The primary structure comprises 1342 residues: DNA-directed RNA polymerase subunit beta (1342 aa).

Residues K1022 and K1200 each carry the N6-acetyllysine modification.

This sequence belongs to the RNA polymerase beta chain family. As to quaternary structure, the RNAP catalytic core consists of 2 alpha, 1 beta, 1 beta' and 1 omega subunit. When a sigma factor is associated with the core the holoenzyme is formed, which can initiate transcription.

The catalysed reaction is RNA(n) + a ribonucleoside 5'-triphosphate = RNA(n+1) + diphosphate. In terms of biological role, DNA-dependent RNA polymerase catalyzes the transcription of DNA into RNA using the four ribonucleoside triphosphates as substrates. The chain is DNA-directed RNA polymerase subunit beta from Escherichia coli O6:K15:H31 (strain 536 / UPEC).